The following is a 180-amino-acid chain: Large ribosomal subunit protein uL5 (180 aa).

It belongs to the universal ribosomal protein uL5 family. As to quaternary structure, part of the 50S ribosomal subunit; part of the 5S rRNA/L5/L18/L25 subcomplex. Contacts the 5S rRNA and the P site tRNA. Forms a bridge to the 30S subunit in the 70S ribosome.

In terms of biological role, this is one of the proteins that bind and probably mediate the attachment of the 5S RNA into the large ribosomal subunit, where it forms part of the central protuberance. In the 70S ribosome it contacts protein S13 of the 30S subunit (bridge B1b), connecting the 2 subunits; this bridge is implicated in subunit movement. Contacts the P site tRNA; the 5S rRNA and some of its associated proteins might help stabilize positioning of ribosome-bound tRNAs. The sequence is that of Large ribosomal subunit protein uL5 from Streptococcus mutans serotype c (strain ATCC 700610 / UA159).